The following is a 659-amino-acid chain: Protein kinase byr2 (659 aa).

The SAM domain occupies 4 to 67 (YTSKEVAEWL…LKQRDYLREF (64 aa)). Positions 180 to 190 (PKLSSVLPTST) are enriched in low complexity. Disordered stretches follow at residues 180–209 (PKLS…YQRP) and 354–387 (SFSP…EEDT). The segment covering 354–365 (SFSPGSSPSFIE) has biased composition (polar residues). A compositionally biased stretch (low complexity) spans 367–380 (PSPISPTSTTSEDT). Positions 394–658 (WIRGALIGSG…ASELLSHPFV (265 aa)) constitute a Protein kinase domain. ATP contacts are provided by residues 400-408 (IGSGSFGQV) and lysine 423. The active-site Proton acceptor is the aspartate 522.

This sequence belongs to the protein kinase superfamily. STE Ser/Thr protein kinase family. MAP kinase kinase kinase subfamily. As to quaternary structure, interacts with rad24 and rad25; these prevent its translocation to the cell membrane during nitrogen starvation.

The protein localises to the cytoplasm. Its subcellular location is the cell membrane. The enzyme catalyses L-seryl-[protein] + ATP = O-phospho-L-seryl-[protein] + ADP + H(+). It catalyses the reaction L-threonyl-[protein] + ATP = O-phospho-L-threonyl-[protein] + ADP + H(+). Serine/threonine protein kinase involved in conjugation and sporulation. It is thought that it phosphorylates the byr1 protein kinase which itself phosphorylate the spk1 kinase. This chain is Protein kinase byr2, found in Schizosaccharomyces pombe (strain 972 / ATCC 24843) (Fission yeast).